The primary structure comprises 85 residues: uncharacterized protein (85 aa).

This is an uncharacterized protein from Gallid herpesvirus 2 (strain Chicken/Md5/ATCC VR-987) (GaHV-2).